Here is a 266-residue protein sequence, read N- to C-terminus: Tryptophan synthase alpha chain (266 aa).

Catalysis depends on proton acceptor residues Glu51 and Asp62.

It belongs to the TrpA family. Tetramer of two alpha and two beta chains.

The catalysed reaction is (1S,2R)-1-C-(indol-3-yl)glycerol 3-phosphate + L-serine = D-glyceraldehyde 3-phosphate + L-tryptophan + H2O. It participates in amino-acid biosynthesis; L-tryptophan biosynthesis; L-tryptophan from chorismate: step 5/5. In terms of biological role, the alpha subunit is responsible for the aldol cleavage of indoleglycerol phosphate to indole and glyceraldehyde 3-phosphate. The chain is Tryptophan synthase alpha chain from Prochlorococcus marinus (strain NATL1A).